The sequence spans 1063 residues: MPHLPLASFRPPFWGLRHSRGLPRFHSVSTQSEPHGSPISRRNREAKQKRLREKQATLEAEIAGESKSPAESIKAWRPKELVLYEIPTKPGEKKDVSGPLPPAYSPRYVEAAWYPWWVREGFFKPEYQARLPQATGETFSMCIPPPNVTGSLHIGHALTVAIQDALVRWHRMRGDQVLWVPGSDHAGIATQAVVEKQLWKERGVRRHELSREAFLREVWQWKEAKGGEICEQLRALGASLDWDRECFTMDVGSSVAVTEAFVRLYKAGLLYRNHQLVNWSCALRSAISDIEVENRPLPGHTQLRLPGCPTPVSFGLLFSVAFPVDGEPDAEVVVGTTRPETLPGDVAVAVHPDDSRYTHLHGRQLRHPLMGQPLPLITDYAVQPHVGTGAVKVTPAHSPADAEMGARHGLSPLNVIAEDGTMTSLCGDWLQGLHRFVAREKIMSVLSEWGLFRGLQNHPMVLPICSRSGDVIEYLLKNQWFVRCQEMGARAAKAVESGALELSPSFHQKNWQHWFSHIGDWCVSRQLWWGHQIPAYLVVEDHAQGEEDCWVVGRSEAEAREVAAELTGRPGAELTLERDPDVLDTWFSSALFPFSALGWPQETPDLARFYPLSLLETGSDLLLFWVGRMVMLGTQLTGQLPFSKVLLHPMVRDRQGRKMSKSLGNVLDPRDIISGVEMQVLQEKLRSGNLDPAELAIVAAAQKKDFPHGIPECGTDALRFTLCSHGVQAGDLHLSVSEVQSCRHFCNKIWNALRFILNALGEKFVPQPAEELSPSSPMDAWILSRLALAAQECERGFLTRELSLVTHALHHFWLHNLCDVYLEAVKPVLWHSPRPLGPPQVLFSCADLGLRLLAPLMPFLAEELWQRLPPRPGCPPAPSISVAPYPSACSLEHWRQPELERRFSRVQEVVQVLRALRATYQLTKARPRVLLQSSEPGDQGLFEAFLEPLGTLGYCGAVGLLPPGAAAPSGWAQAPLSDTAQVYMELQGLVDPQIQLPLLAARRYKLQKQLDSLTARTPSEGEAGTQRQQKLSSLQLELSKLDKAASHLRQLMDEPPAPGSPEL.

A mitochondrion-targeting transit peptide spans 1–26; that stretch reads MPHLPLASFRPPFWGLRHSRGLPRFH. The tract at residues 25 to 53 is disordered; the sequence is FHSVSTQSEPHGSPISRRNREAKQKRLRE. The segment covering 42 to 53 has biased composition (basic and acidic residues); sequence RNREAKQKRLRE. The 'HIGH' region signature appears at 146 to 156; it reads PNVTGSLHIGH. The short motif at 658 to 662 is the 'KMSKS' region element; the sequence is KMSKS. Lys661 serves as a coordination point for ATP.

This sequence belongs to the class-I aminoacyl-tRNA synthetase family.

The protein localises to the mitochondrion. It catalyses the reaction tRNA(Val) + L-valine + ATP = L-valyl-tRNA(Val) + AMP + diphosphate. Its function is as follows. Catalyzes the attachment of valine to tRNA(Val) in a two-step reaction: valine is first activated by ATP to form Val-AMP and then transferred to the acceptor end of tRNA(Val). This Homo sapiens (Human) protein is Valine--tRNA ligase, mitochondrial (VARS2).